Reading from the N-terminus, the 184-residue chain is Trypsin/chymotrypsin inhibitor (184 aa).

2 cysteine pairs are disulfide-bonded: C39/C84 and C136/C147.

The protein belongs to the protease inhibitor I3 (leguminous Kunitz-type inhibitor) family. As to quaternary structure, homodimer.

In terms of biological role, inhibits trypsin and alpha-chymotrypsin. This Alocasia macrorrhizos (Giant taro) protein is Trypsin/chymotrypsin inhibitor.